Consider the following 484-residue polypeptide: MEETTKQNNMKKKKKILLHSDDSKKKERHIVTWSPEEDDILRKQISLQGTENWAIIASKFNDKSTRQCRRRWYTYLNSDFKRGGWSPEEDTLLCEAQRLFGNRWTEIAKVVSGRTDNAVKNRFTTLCKKRAKHEAMAKENRIACCVNSDNKRLLFPDGISTPLKAESESPLTKKMRRSHIPNLTEIKSYGDRSHIKVESTMNQQRRHPFSVVAHNATSSDGTEEQKQIGNVKESDGEDKSNQEVFLKKDDSKVTALMQQAELLSSLAQKVNADNTDQSMENAWKVLQDFLNKSKENDLFRYGIPDIDFQLDEFKDLVEDLRSSNEDSQSSWRQPDLHDSPASSEYSSGSGSGSTIMTHPSGDKTQQLMSDTQTTSHQQNGGELLQDNGIVSDATVEQVGLLSTGHDVLKNSNETVPIPGEEEFNSPVQVTPLFRSLAAGIPSPQFSESERNFLLKTLGVESPSPYPSANPSQPPPCKRVLLDSL.

Residues 1–20 are disordered; the sequence is MEETTKQNNMKKKKKILLHS. The Nuclear localization signal motif lies at 13-20; sequence KKKILLHS. HTH myb-type domains lie at 25 to 76 and 77 to 131; these read KKER…YTYL and NSDF…KKRA. 2 consecutive DNA-binding regions (H-T-H motif) follow at residues 53–76 and 104–127; these read WAII…YTYL and WTEI…TTLC. Disordered regions lie at residues 215–241, 321–383, and 458–484; these read NATS…DKSN, RSSN…GGEL, and GVES…LDSL. Positions 232-241 are enriched in basic and acidic residues; sequence KESDGEDKSN. Low complexity predominate over residues 339–348; sequence SPASSEYSSG. A compositionally biased stretch (polar residues) spans 354–380; sequence TIMTHPSGDKTQQLMSDTQTTSHQQNG. Pro residues predominate over residues 463–476; sequence SPYPSANPSQPPPC.

In terms of assembly, interacts with RBR1. As to expression, expressed at low levels in all organs including roots, leaves, hypocotyls stems, flowers, siliques and buds.

It localises to the nucleus. Functionally, transcription factor that binds to DNA in promoters cis-regulatory element 5'-GGCGCGC-3' of cell cycle genes, including cyclins, cyclin-dependent kinases (CDKs), and components of the pre-replication complex. Binds to DNA in promoters cis-regulatory element 5'-AGCCG-3' of auxin regulated genes (e.g. PIN3 and PIN7). Together with FAMA and MYB124, ensures that stomata contain just two guard cells (GCs) by enforcing a single symmetric precursor cell division before stomatal maturity. Represses the expression of the mitosis-inducing factors CDKB1-1 and CDKA-1, specifically required for the last guard mother cells (GMC) symmetric divisions in the stomatal pathway. Represses CYCA2-3 in newly formed guard cells. Together with MYB88, regulates stomata spacing by restricting divisions late in the stomatal cell lineage thus limiting the number of GMC divisions. In collaboration with CDKB1-1 and CDKB1-2, restrict the G1/S transition and chloroplast and nuclear number during stomatal formation, and normally maintain fate and developmental progression throughout the stomatal cell lineage. Involved in sensing and/or transducing abiotic stress (e.g. drought and salt), probably via the positive regulation of NAC019. Regulates female reproduction being required for entry into megasporogenesis, probably via the regulation of cell cycle genes. Plays a minor role in lateral roots (LRs) initiation. Involved complementarily in establishing the gravitropic set-point angles of lateral roots by regulating the transcription of PIN3 and PIN7 in gravity-sensing cells of primary and lateral roots. The sequence is that of Transcription factor MYB88 from Arabidopsis thaliana (Mouse-ear cress).